We begin with the raw amino-acid sequence, 219 residues long: Large ribosomal subunit protein eL13 (219 aa).

Positions 198–219 (KDAAENPDDVTKAPTAVKRNKT) are disordered.

This sequence belongs to the eukaryotic ribosomal protein eL13 family. In terms of assembly, component of the 60S large ribosomal subunit (LSU).

Its subcellular location is the cytoplasm. Component of the ribosome, a large ribonucleoprotein complex responsible for the synthesis of proteins in the cell. The small ribosomal subunit (SSU) binds messenger RNAs (mRNAs) and translates the encoded message by selecting cognate aminoacyl-transfer RNA (tRNA) molecules. The large subunit (LSU) contains the ribosomal catalytic site termed the peptidyl transferase center (PTC), which catalyzes the formation of peptide bonds, thereby polymerizing the amino acids delivered by tRNAs into a polypeptide chain. The nascent polypeptides leave the ribosome through a tunnel in the LSU and interact with protein factors that function in enzymatic processing, targeting, and the membrane insertion of nascent chains at the exit of the ribosomal tunnel. As part of the LSU, it is probably required for its formation and the maturation of rRNAs. The polypeptide is Large ribosomal subunit protein eL13 (RpL13) (Spodoptera frugiperda (Fall armyworm)).